Here is a 239-residue protein sequence, read N- to C-terminus: Uridylate kinase (239 aa).

An ATP-binding site is contributed by 13–16 (KVSG). Glycine 55 lines the UMP pocket. ATP-binding residues include glycine 56 and arginine 60. UMP-binding positions include aspartate 75 and 136 to 143 (TGNPFCTT). ATP is bound by residues threonine 163, glutamine 164, tyrosine 169, and aspartate 172.

This sequence belongs to the UMP kinase family. As to quaternary structure, homohexamer.

The protein localises to the cytoplasm. It carries out the reaction UMP + ATP = UDP + ADP. It functions in the pathway pyrimidine metabolism; CTP biosynthesis via de novo pathway; UDP from UMP (UMPK route): step 1/1. With respect to regulation, inhibited by UTP. In terms of biological role, catalyzes the reversible phosphorylation of UMP to UDP. This is Uridylate kinase from Rickettsia bellii (strain RML369-C).